The chain runs to 331 residues: E3 ubiquitin-protein ligase Siah2 (331 aa).

Positions 1–26 (MSRPSSAGGAAGGLGAGKAGGSKHGG) are disordered. The segment covering 9-26 (GAAGGLGAGKAGGSKHGG) has biased composition (gly residues). The RING-type zinc-finger motif lies at 89–124 (CPVCFDYVLPPILQCQAGHLVCNQCRQKLSCCPTCR). The tract at residues 139-331 (VASTLPFPCK…LGINVTISMC (193 aa)) is SBD. The segment at 142–202 (TLPFPCKYSS…VMPHLMHAHK (61 aa)) adopts an SIAH-type zinc-finger fold. Zn(2+) contacts are provided by Cys-147, Cys-154, His-166, Cys-170, Cys-177, Cys-184, His-196, and His-201.

Belongs to the SINA (Seven in absentia) family. In terms of assembly, homodimer. In embryos it is expressed in all blastomeres starting at the mid-blastulla. After 20 somite stage, it is expressed mainly in the posterior part. Expressed in brain, including the eye, the cranial cavity, otic vesicle, optic chiasm and in the gut.

It catalyses the reaction S-ubiquitinyl-[E2 ubiquitin-conjugating enzyme]-L-cysteine + [acceptor protein]-L-lysine = [E2 ubiquitin-conjugating enzyme]-L-cysteine + N(6)-ubiquitinyl-[acceptor protein]-L-lysine.. It participates in protein modification; protein ubiquitination. In terms of biological role, E3 ubiquitin-protein ligase that mediates ubiquitination and subsequent proteasomal degradation of target proteins. E3 ubiquitin ligases accept ubiquitin from an E2 ubiquitin-conjugating enzyme in the form of a thioester and then directly transfers the ubiquitin to targeted substrates. It probably triggers the ubiquitin-mediated degradation of different substrates. Induces cellular growth arrest by inhibiting the G2/M transition. May play a role in the regulation of the cellular clock function. This Danio rerio (Zebrafish) protein is E3 ubiquitin-protein ligase Siah2 (siah2l).